Consider the following 616-residue polypeptide: MLVRLTKLSCPAYHWFHALKIKKCLPLCAPRCSSTSAVPQITTHYTVHPREKDKRWEGVNMERFAEEADVVIVGAGPAGLSAAIRLKQLAAEQGKDIRVCLVEKAAQIGAHTLSGACLDPAAFKELFPDWKEKGAPLNTPVTEDRFAILTEKHRIPVPILPGLPMNNHGNYIVRLGHLVSWMGEQAEALGVEVYPGYAAAEVLYHEDGSVKGIATNDVGIQKDGAPKTTFERGLELHAKVTVFAEGCHGHLAKQLYKKFDLRASCDAQTYGIGLKELWIIDEKKWKPGRVDHTVGWPLDRHTYGGSFLYHLNEGEPLVAVGFVVGLDYQNPYLSPFREFQRWKHHPSIQPTLEGGKRIAYGARALNEGGLQSIPKLTFPGGLLIGCSPGFMNVPKIKGTHTAMKSGSLAAESIFKQLTSENLQSKTTGLHVTEYEDNLKQSWVWKELHAVRNIRPSCHGILGVYGGMIYTGIFYWILRGMEPWTLKHKGSDSDQLKPAKDCTPIEYPKPDGQISFDLLSSVALSGTNHEHDQPAHLTLKDDSIPVNRNLSIYDGPEQRFCPAGVYEFVPLEQGDGFRLQINAQNCVHCKTCDIKDPSQNINWVVPEGGGGPAYNGM.

The transit peptide at 1–32 (MLVRLTKLSCPAYHWFHALKIKKCLPLCAPRC) directs the protein to the mitochondrion. 70-84 (VVIVGAGPAGLSAAI) provides a ligand contact to FAD. Lysine 95 carries the N6-acetyllysine modification. The stretch at 108–129 (IGAHTLSGACLDPAAFKELFPD) is an intramembrane region. Lysine 131 and lysine 222 each carry N6-acetyllysine. Positions 304 and 305 each coordinate a ubiquinone. Residues lysine 356 and lysine 415 each carry the N6-acetyllysine modification. An intramembrane segment occupies 427 to 446 (TGLHVTEYEDNLKQSWVWKE). Serine 550 carries the post-translational modification Phosphoserine. Cysteine 560, cysteine 585, cysteine 588, and cysteine 591 together coordinate [4Fe-4S] cluster. Positions 576–605 (FRLQINAQNCVHCKTCDIKDPSQNINWVVP) constitute a 4Fe-4S ferredoxin-type domain.

It belongs to the ETF-QO/FixC family. In terms of assembly, monomer. Requires [4Fe-4S] cluster as cofactor. FAD serves as cofactor. Post-translationally, acetylation of Lys-95 and Lys-222 is observed in liver mitochondria from fasted mice but not from fed mice.

It localises to the mitochondrion inner membrane. It carries out the reaction a ubiquinone + reduced [electron-transfer flavoprotein] = a ubiquinol + oxidized [electron-transfer flavoprotein] + H(+). Accepts electrons from ETF and reduces ubiquinone. The sequence is that of Electron transfer flavoprotein-ubiquinone oxidoreductase, mitochondrial (Etfdh) from Mus musculus (Mouse).